The primary structure comprises 185 residues: Elongation factor P (185 aa).

Belongs to the elongation factor P family.

The protein localises to the cytoplasm. It participates in protein biosynthesis; polypeptide chain elongation. Functionally, involved in peptide bond synthesis. Stimulates efficient translation and peptide-bond synthesis on native or reconstituted 70S ribosomes in vitro. Probably functions indirectly by altering the affinity of the ribosome for aminoacyl-tRNA, thus increasing their reactivity as acceptors for peptidyl transferase. This is Elongation factor P from Desulfovibrio desulfuricans (strain ATCC 27774 / DSM 6949 / MB).